Here is a 232-residue protein sequence, read N- to C-terminus: Large ribosomal subunit protein uL1 (232 aa).

The protein belongs to the universal ribosomal protein uL1 family. Part of the 50S ribosomal subunit.

Binds directly to 23S rRNA. The L1 stalk is quite mobile in the ribosome, and is involved in E site tRNA release. In terms of biological role, protein L1 is also a translational repressor protein, it controls the translation of the L11 operon by binding to its mRNA. The sequence is that of Large ribosomal subunit protein uL1 from Parabacteroides distasonis (strain ATCC 8503 / DSM 20701 / CIP 104284 / JCM 5825 / NCTC 11152).